Reading from the N-terminus, the 66-residue chain is Large ribosomal subunit protein uL29 (66 aa).

It belongs to the universal ribosomal protein uL29 family.

This chain is Large ribosomal subunit protein uL29, found in Francisella tularensis subsp. holarctica (strain LVS).